The primary structure comprises 301 residues: MLRQTLTQASRMRPCISVVGFRGFHASSPCEATLKEIEQRLKSIKNIEKITKTIKTVAQTKLTRAQRAMEASNKYYRVSDEVFKEAGTKAPEEGKTLMVACSSDKGLCGGIHSSISRLIRRELHDPKTFENTSLCILGEKVRTQLLRFCPESFYLTFAHIGGASPSFEEALQISSNILEHAKDYDRIVLVYNKFASAVSFETVMKNLYTTKAINESPNLSAYEVSDEVHQPLMEFAFANAIFSAMAEAHCSEMSSRRNAMENASKSAGDMINKFSIQYNRQRQASITNELIDIVTGANSLA.

This sequence belongs to the ATPase gamma chain family. In terms of assembly, F-type ATPases have 2 components, CF(1) - the catalytic core - and CF(0) - the membrane proton channel. CF(1) has five subunits: alpha(3), beta(3), gamma(1), delta(1), epsilon(1). CF(0) has three main subunits: a, b and c.

It localises to the mitochondrion. It is found in the mitochondrion inner membrane. In terms of biological role, mitochondrial membrane ATP synthase (F(1)F(0) ATP synthase or Complex V) produces ATP from ADP in the presence of a proton gradient across the membrane which is generated by electron transport complexes of the respiratory chain. F-type ATPases consist of two structural domains, F(1) - containing the extramembraneous catalytic core, and F(0) - containing the membrane proton channel, linked together by a central stalk and a peripheral stalk. During catalysis, ATP synthesis in the catalytic domain of F(1) is coupled via a rotary mechanism of the central stalk subunits to proton translocation. Part of the complex F(1) domain and the central stalk which is part of the complex rotary element. The gamma subunit protrudes into the catalytic domain formed of alpha(3)beta(3). Rotation of the central stalk against the surrounding alpha(3)beta(3) subunits leads to hydrolysis of ATP in three separate catalytic sites on the beta subunits. This chain is ATP synthase subunit gamma, mitochondrial (atp3), found in Schizosaccharomyces pombe (strain 972 / ATCC 24843) (Fission yeast).